A 268-amino-acid chain; its full sequence is Hydroxyethylthiazole kinase 2 (268 aa).

Position 42 (M42) interacts with substrate. K117 and T167 together coordinate ATP. G194 contacts substrate.

Belongs to the Thz kinase family. Mg(2+) serves as cofactor.

The catalysed reaction is 5-(2-hydroxyethyl)-4-methylthiazole + ATP = 4-methyl-5-(2-phosphooxyethyl)-thiazole + ADP + H(+). The protein operates within cofactor biosynthesis; thiamine diphosphate biosynthesis; 4-methyl-5-(2-phosphoethyl)-thiazole from 5-(2-hydroxyethyl)-4-methylthiazole: step 1/1. Catalyzes the phosphorylation of the hydroxyl group of 4-methyl-5-beta-hydroxyethylthiazole (THZ). In Streptococcus pneumoniae (strain CGSP14), this protein is Hydroxyethylthiazole kinase 2.